Here is a 100-residue protein sequence, read N- to C-terminus: Small ribosomal subunit protein uS14 (100 aa).

This sequence belongs to the universal ribosomal protein uS14 family. In terms of assembly, part of the 30S ribosomal subunit. Contacts proteins S3 and S10.

In terms of biological role, binds 16S rRNA, required for the assembly of 30S particles and may also be responsible for determining the conformation of the 16S rRNA at the A site. This is Small ribosomal subunit protein uS14 from Synechocystis sp. (strain ATCC 27184 / PCC 6803 / Kazusa).